A 118-amino-acid chain; its full sequence is SPbeta prophage-derived uncharacterized protein YoqR (118 aa).

This is SPbeta prophage-derived uncharacterized protein YoqR (yoqR) from Bacillus subtilis (strain 168).